The following is a 326-amino-acid chain: mRNA decay activator protein ZFP36 (326 aa).

A necessary for nuclear export region spans residues 1-15 (MDLTAIYESLLSLSP). The segment at 1 to 100 (MDLTAIYESL…PTSPTATSTT (100 aa)) is necessary and sufficient for the association with mRNA decay enzymes and mRNA decay activation. 2 necessary for localization of ARE-containing mRNAs to processing bodies (PBs) regions span residues 1–174 (MDLT…DLAA) and 100–326 (TPSR…SVSE). Residues 13 to 66 (LSPDVPVPSDHGGTESSPGWGSSGPWSLSPSDSSPSGVTSRLPGRSTSLVEGRS) are disordered. The segment covering 28-49 (SSPGWGSSGPWSLSPSDSSPSG) has biased composition (low complexity). Phosphoserine; by MAPKAPK2 is present on serine 60. Serine 66 carries the phosphoserine modification. The P-P-P-P-G repeat unit spans residues 71-75 (PPPPG). A disordered region spans residues 78–102 (PLAPRLGPELSPSPTSPTATSTTPS). Serine 88 and serine 90 each carry phosphoserine. Threonine 92 bears the Phosphothreonine mark. Serine 93 carries the phosphoserine modification. The segment at 95-168 (TATSTTPSRY…GSRCHFIHNP (74 aa)) is necessary for nuclear localization. Residues 97 to 173 (TSTTPSRYKT…FIHNPSEDLA (77 aa)) form a necessary for RNA-binding region. C3H1-type zinc fingers lie at residues 103–131 (RYKTELCRTFSESGRCRYGAKCQFAHGLG) and 141–169 (KYKTELCHKFYLQGRCPYGSRCHFIHNPS). Residues 103 to 194 (RYKTELCRTF…ISFSGLPSGR (92 aa)) are necessary for interaction with PABPN1. At serine 169 the chain carries Phosphoserine. A necessary for mRNA decay activation region spans residues 174–326 (APGHPPVLRQ…PIFNRISVSE (153 aa)). Disordered stretches follow at residues 175-245 (PGHP…RRDP) and 273-292 (SVQSLGSDPDEYASSGSSLG). Position 186 is a phosphoserine; by MAPKAPK2 (serine 186). A Phosphoserine modification is found at serine 197. The stretch at 198–202 (PPPPG) is one P-P-P-P-G repeat. Positions 204–216 (AGPSLSSSSFSPS) are enriched in low complexity. Serine 218 is modified (phosphoserine). Residues 219-223 (PPPPG) form a P-P-P-P-G repeat. Residue serine 228 is modified to Phosphoserine; by MAPK1; in vitro. Phosphoserine occurs at positions 276, 296, and 323. An interaction with CNOT1 region spans residues 312–326 (APRRLPIFNRISVSE).

Associates with cytoplasmic CCR4-NOT and PAN2-PAN3 deadenylase complexes to trigger ARE-containing mRNA deadenylation and decay processes. Part of a mRNA decay activation complex at least composed of poly(A)-specific exoribonucleases CNOT6, EXOSC2 and XRN1 and mRNA-decapping enzymes DCP1A and DCP2. Associates with the RNA exosome complex. Interacts (via phosphorylated form) with 14-3-3 proteins; these interactions promote exclusion of ZFP36 from cytoplasmic stress granules in response to arsenite treatment in a MAPKAPK2-dependent manner and does not prevent CCR4-NOT deadenylase complex recruitment or ZFP36-induced ARE-containing mRNA deadenylation and decay processes. Interacts with 14-3-3 proteins; these interactions occur in response to rapamycin in an Akt-dependent manner. Interacts with AGO2 and AGO4. Interacts (via C-terminus) with CNOT1; this interaction occurs in a RNA-independent manner and induces mRNA deadenylation. Interacts (via N-terminus) with CNOT6. Interacts with CNOT6L. Interacts (via C-terminus) with CNOT7; this interaction occurs in a RNA-independent manner, induces mRNA deadenylation and is inhibited in a phosphorylation MAPKAPK2-dependent manner. Interacts (via unphosphorylated form) with CNOT8; this interaction occurs in a RNA-independent manner and is inhibited in a phosphorylation MAPKAPK2-dependent manner. Interacts with DCP1A. Interacts (via N-terminus) with DCP2. Interacts with EDC3. Interacts (via N-terminus) with EXOSC2. Interacts with heat shock 70 kDa proteins. Interacts with KHSRP; this interaction increases upon cytokine-induced treatment. Interacts with MAP3K4; this interaction enhances the association with SH3KBP1/CIN85. Interacts with MAPKAPK2; this interaction occurs upon skeletal muscle satellite cell activation. Interacts with NCL. Interacts with NUP214; this interaction increases upon lipopolysaccharide (LPS) stimulation. Interacts with PABPC1; this interaction occurs in a RNA-dependent manner. Interacts (via hypophosphorylated form) with PABPN1 (via RRM domain and C-terminal arginine-rich region); this interaction occurs in the nucleus in a RNA-independent manner, decreases in presence of single-stranded poly(A) RNA-oligomer and in a p38 MAPK-dependent-manner and inhibits nuclear poly(A) tail synthesis. Interacts with PAN2. Interacts (via C3H1-type zinc finger domains) with PKM. Interacts (via C3H1-type zinc finger domains) with nuclear RNA poly(A) polymerase. Interacts with PPP2CA; this interaction occurs in LPS-stimulated cells and induces ZFP36 dephosphorylation, and hence may promote ARE-containing mRNAs decay. Interacts (via C-terminus) with PRR5L (via C-terminus); this interaction may accelerate ZFP36-mediated mRNA decay during stress. Interacts (via C-terminus) with SFN; this interaction occurs in a phosphorylation-dependent manner. Interacts (via extreme C-terminal region) with SH3KBP1/CIN85 (via SH3 domains); this interaction enhances MAP3K4-induced phosphorylation of ZFP36 at Ser-66 and Ser-93 and does not alter neither ZFP36 binding to ARE-containing transcripts nor TNF-alpha mRNA decay. Interacts with XRN1. Interacts (via C-terminus and Ser-186 phosphorylated form) with YWHAB; this interaction occurs in a p38/MAPKAPK2-dependent manner, increases cytoplasmic localization of ZFP36 and protects ZFP36 from Ser-186 dephosphorylation by serine/threonine phosphatase 2A, and hence may be crucial for stabilizing ARE-containing mRNAs. Interacts (via phosphorylated form) with YWHAE. Interacts (via C-terminus) with YWHAG; this interaction occurs in a phosphorylation-dependent manner. Interacts with YWHAH; this interaction occurs in a phosphorylation-dependent manner. Interacts with YWHAQ; this interaction occurs in a phosphorylation-dependent manner. Interacts with (via C-terminus) YWHAZ; this interaction occurs in a phosphorylation-dependent manner. Interacts (via P-P-P-P-G repeats) with GIGYF2; the interaction is direct. In terms of assembly, (Microbial infection) Interacts (via C-terminus) with HTLV-1 TAX (via C-terminus); this interaction inhibits HTLV-1 TAX to transactivate viral long terminal repeat (LTR) promoter. Phosphorylated. Phosphorylation at serine and/or threonine residues occurs in a p38 MAPK- and MAPKAPK2-dependent manner. Phosphorylated by MAPKAPK2 at Ser-60 and Ser-186; phosphorylation increases its stability and cytoplasmic localization, promotes binding to 14-3-3 adapter proteins and inhibits the recruitment of cytoplasmic CCR4-NOT and PAN2-PAN3 deadenylase complexes to the mRNA decay machinery, thereby inhibiting ZFP36-induced ARE-containing mRNA deadenylation and decay processes. Phosphorylation by MAPKAPK2 does not impair ARE-containing RNA-binding. Phosphorylated in a MAPKAPK2- and p38 MAPK-dependent manner upon skeletal muscle satellite cell activation; this phosphorylation inhibits ZFP36-mediated mRNA decay activity, and hence stabilizes MYOD1 mRNA. Phosphorylated by MAPK1 upon mitogen stimulation. Phosphorylated at Ser-66 and Ser-93; these phosphorylations increase in a SH3KBP1-dependent manner. Phosphorylated at serine and threonine residues in a pyruvate kinase PKM- and p38 MAPK-dependent manner. Phosphorylation at Ser-60 may participate in the PKM-mediated degradation of ZFP36 in a p38 MAPK-dependent manner. Dephosphorylated by serine/threonine phosphatase 2A at Ser-186. Post-translationally, ubiquitinated; pyruvate kinase (PKM)-dependent ubiquitination leads to proteasomal degradation through a p38 MAPK signaling pathway. Expressed in both basal and suprabasal epidermal layers. Expressed in epidermal keratinocytes. Expressed strongly in mature dendritic cells. Expressed in immature dendritic cells (at protein level).

It is found in the nucleus. The protein resides in the cytoplasm. Its subcellular location is the cytoplasmic granule. It localises to the P-body. Its function is as follows. Zinc-finger RNA-binding protein that destabilizes several cytoplasmic AU-rich element (ARE)-containing mRNA transcripts by promoting their poly(A) tail removal or deadenylation, and hence provide a mechanism for attenuating protein synthesis. Acts as an 3'-untranslated region (UTR) ARE mRNA-binding adapter protein to communicate signaling events to the mRNA decay machinery. Recruits deadenylase CNOT7 (and probably the CCR4-NOT complex) via association with CNOT1, and hence promotes ARE-mediated mRNA deadenylation. Functions also by recruiting components of the cytoplasmic RNA decay machinery to the bound ARE-containing mRNAs. Self regulates by destabilizing its own mRNA. Binds to 3'-UTR ARE of numerous mRNAs and of its own mRNA. Plays a role in anti-inflammatory responses; suppresses tumor necrosis factor (TNF)-alpha production by stimulating ARE-mediated TNF-alpha mRNA decay and several other inflammatory ARE-containing mRNAs in interferon (IFN)- and/or lipopolysaccharide (LPS)-induced macrophages. Also plays a role in the regulation of dendritic cell maturation at the post-transcriptional level, and hence operates as part of a negative feedback loop to limit the inflammatory response. Promotes ARE-mediated mRNA decay of hypoxia-inducible factor HIF1A mRNA during the response of endothelial cells to hypoxia. Positively regulates early adipogenesis of preadipocytes by promoting ARE-mediated mRNA decay of immediate early genes (IEGs). Negatively regulates hematopoietic/erythroid cell differentiation by promoting ARE-mediated mRNA decay of the transcription factor STAT5B mRNA. Plays a role in maintaining skeletal muscle satellite cell quiescence by promoting ARE-mediated mRNA decay of the myogenic determination factor MYOD1 mRNA. Associates also with and regulates the expression of non-ARE-containing target mRNAs at the post-transcriptional level, such as MHC class I mRNAs. Participates in association with argonaute RISC catalytic components in the ARE-mediated mRNA decay mechanism; assists microRNA (miRNA) targeting ARE-containing mRNAs. May also play a role in the regulation of cytoplasmic mRNA decapping; enhances decapping of ARE-containing RNAs, in vitro. Involved in the delivery of target ARE-mRNAs to processing bodies (PBs). In addition to its cytosolic mRNA-decay function, affects nuclear pre-mRNA processing. Negatively regulates nuclear poly(A)-binding protein PABPN1-stimulated polyadenylation activity on ARE-containing pre-mRNA during LPS-stimulated macrophages. Also involved in the regulation of stress granule (SG) and P-body (PB) formation and fusion. Plays a role in the regulation of keratinocyte proliferation, differentiation and apoptosis. Plays a role as a tumor suppressor by inhibiting cell proliferation in breast cancer cells. Functionally, (Microbial infection) Negatively regulates HTLV-1 TAX-dependent transactivation of viral long terminal repeat (LTR) promoter. The chain is mRNA decay activator protein ZFP36 from Homo sapiens (Human).